The following is a 161-amino-acid chain: MKKFTQIIDQQKALELTSTEKPKLTLCLTMDERTKSRLKVALSDGQEAGLFLPRGTVLKEGDILLSEEGDVVTIEAAKEQVSTVYSDDPLLLARVCYHLGNRHVPLQIEAGWCRYFHDHVLDDMARGLGATVVVGLEKYQPEPGAYGGSSGGHHHHHDHHH.

This sequence belongs to the UreE family. As to quaternary structure, homodimer.

The protein resides in the cytoplasm. Functionally, involved in urease metallocenter assembly. Binds nickel. Probably functions as a nickel donor during metallocenter assembly. It is not essential for urease activity. This chain is Urease accessory protein UreE, found in Proteus mirabilis (strain HI4320).